Consider the following 284-residue polypeptide: Putative ABC transporter ATP-binding protein SCO5958 (284 aa).

One can recognise an ABC transporter domain in the interval 15–250 (VALRGAAFAY…DLLRRAGLRL (236 aa)). ATP is bound at residue 48-55 (GRNGSGKT).

This sequence belongs to the ABC transporter superfamily.

It localises to the cell membrane. Probably part of an ABC transporter complex. Responsible for energy coupling to the transport system. The polypeptide is Putative ABC transporter ATP-binding protein SCO5958 (Streptomyces coelicolor (strain ATCC BAA-471 / A3(2) / M145)).